The chain runs to 113 residues: MANTKKSAINQVVTRDYTIHMHKRLYGVSFKKRAPRAIKEIVAFAQKHMQTKEVRVDPSLNKEVWKRGIRNVPHRLRLRLSRKRSDEDDKALYTYVQAVDVANPKMETTVVEE.

Belongs to the eukaryotic ribosomal protein eL31 family. As to quaternary structure, component of the large ribosomal subunit (LSU). Mature yeast ribosomes consist of a small (40S) and a large (60S) subunit. The 40S small subunit contains 1 molecule of ribosomal RNA (18S rRNA) and at least 33 different proteins. The large 60S subunit contains 3 rRNA molecules (25S, 5.8S and 5S rRNA) and at least 46 different proteins.

It is found in the cytoplasm. Component of the ribosome, a large ribonucleoprotein complex responsible for the synthesis of proteins in the cell. The small ribosomal subunit (SSU) binds messenger RNAs (mRNAs) and translates the encoded message by selecting cognate aminoacyl-transfer RNA (tRNA) molecules. The large subunit (LSU) contains the ribosomal catalytic site termed the peptidyl transferase center (PTC), which catalyzes the formation of peptide bonds, thereby polymerizing the amino acids delivered by tRNAs into a polypeptide chain. The nascent polypeptides leave the ribosome through a tunnel in the LSU and interact with protein factors that function in enzymatic processing, targeting, and the membrane insertion of nascent chains at the exit of the ribosomal tunnel. This chain is Large ribosomal subunit protein eL31 (rpl31), found in Schizosaccharomyces pombe (strain 972 / ATCC 24843) (Fission yeast).